Reading from the N-terminus, the 185-residue chain is Putative manganese efflux pump MntP (185 aa).

6 helical membrane passes run 8 to 28, 42 to 62, 66 to 86, 103 to 123, 137 to 157, and 165 to 185; these read LFVI…SIGL, ISFG…GVLF, ILVI…ILML, MYFI…FTVL, IFIG…SGYL, and KYAN…MIFM.

This sequence belongs to the MntP (TC 9.B.29) family.

The protein localises to the cell membrane. In terms of biological role, probably functions as a manganese efflux pump. This Clostridium novyi (strain NT) protein is Putative manganese efflux pump MntP.